Consider the following 247-residue polypeptide: Uridylate kinase (247 aa).

Residue 21–24 (KVSG) participates in ATP binding. Residue Gly63 coordinates UMP. ATP contacts are provided by Gly64 and Arg68. UMP-binding positions include Asp83 and 144 to 151 (TGNPFCTT). 4 residues coordinate ATP: Thr171, Gln172, Tyr177, and Asp180.

This sequence belongs to the UMP kinase family. As to quaternary structure, homohexamer.

Its subcellular location is the cytoplasm. The catalysed reaction is UMP + ATP = UDP + ADP. Its pathway is pyrimidine metabolism; CTP biosynthesis via de novo pathway; UDP from UMP (UMPK route): step 1/1. With respect to regulation, inhibited by UTP. Its function is as follows. Catalyzes the reversible phosphorylation of UMP to UDP. The sequence is that of Uridylate kinase from Rickettsia rickettsii (strain Sheila Smith).